The chain runs to 501 residues: Ribose import ATP-binding protein RbsA (501 aa).

ABC transporter domains lie at 5–241 and 252–495; these read LQLK…VGRK and APGD…VGKL. 37 to 44 contributes to the ATP binding site; the sequence is GENGAGKS.

It belongs to the ABC transporter superfamily. Ribose importer (TC 3.A.1.2.1) family. The complex is composed of an ATP-binding protein (RbsA), two transmembrane proteins (RbsC) and a solute-binding protein (RbsB).

The protein localises to the cell inner membrane. It catalyses the reaction D-ribose(out) + ATP + H2O = D-ribose(in) + ADP + phosphate + H(+). Part of the ABC transporter complex RbsABC involved in ribose import. Responsible for energy coupling to the transport system. This is Ribose import ATP-binding protein RbsA from Escherichia coli (strain UTI89 / UPEC).